Here is a 344-residue protein sequence, read N- to C-terminus: F-box protein HRT3 (344 aa).

One copy of the TPR repeat lies at 14–47; sequence AIAIWEKGVLKEKDGSMSDAINFYRSALKIHDNV. The region spanning 98 to 148 is the F-box domain; it reads WILEILPDDILLRIIKKVILMSGESWVNLSMTCSTFSKLCFHDSVPFKTFA.

As to quaternary structure, interacts with SKP1. Component of the probable SCF(HRT3) complex containing CDC53, SKP1, RBX1 and HRT3.

It participates in protein modification; protein ubiquitination. Substrate recognition component of a SCF (SKP1-CUL1-F-box protein) E3 ubiquitin-protein ligase complex which mediates the ubiquitination and subsequent proteasomal degradation of target proteins. Probably recognizes and binds to phosphorylated target proteins. This Saccharomyces cerevisiae (strain ATCC 204508 / S288c) (Baker's yeast) protein is F-box protein HRT3 (HRT3).